The sequence spans 120 residues: SPbeta prophage-derived uncharacterized protein YosG (120 aa).

The protein is SPbeta prophage-derived uncharacterized protein YosG (yosG) of Bacillus subtilis (strain 168).